We begin with the raw amino-acid sequence, 339 residues long: MTARAFWLLCLIVGSSPEAPVAERKTSPPHSRKPDSRGCPSAEETPGPRAQPLLEAPQRPRAAEVAPAARAWPDPRRRKPPPPADNQASFREAARAPAGPPGPRLAQAENRASPRREPASEDAPRRARSRALRFPAARPPALATEGSAGHAHPNRPRAAALAPGPAPAPPPRFSLSFGLSPPQRDAEPGAEPCARACRSDLDEREAFCESEFAVNGIVHDVDVLGAGIRLVTLLVDRDGLYKMNRLYLTPDGFFFRVHMLALDSSSCNKPCPEFKPGSRYIVMGHIYHKRRQLPTALLQVLRGRLRPGDGLLRSSSSYVKRFNRKREGQIQGAIHTQCI.

An N-terminal signal peptide occupies residues 1-17 (MTARAFWLLCLIVGSSP). The segment at 17 to 191 (PEAPVAERKT…PQRDAEPGAE (175 aa)) is disordered. Over residues 21 to 36 (VAERKTSPPHSRKPDS) the composition is skewed to basic and acidic residues. Residues 56–72 (APQRPRAAEVAPAARAW) are compositionally biased toward low complexity. Basic and acidic residues predominate over residues 112–125 (ASPRREPASEDAPR). Residues 132–163 (LRFPAARPPALATEGSAGHAHPNRPRAAALAP) are compositionally biased toward low complexity. Intrachain disulfides connect Cys193-Cys267, Cys197-Cys271, and Cys208-Cys338. The NTR domain maps to 193–338 (CARACRSDLD…QIQGAIHTQC (146 aa)).

The protein belongs to the UPF0450 family.

In Homo sapiens (Human), this protein is UPF0450 protein C17orf58 (C17orf58).